Here is a 258-residue protein sequence, read N- to C-terminus: Clathrin light chain 3 (258 aa).

The segment covering 1-18 (MSSTLSNEESGLGDSNRS) has biased composition (polar residues). The interval 1–96 (MSSTLSNEES…PPPSAMEKEE (96 aa)) is disordered. Position 2 is an N-acetylserine (Ser-2). The segment covering 34 to 50 (SRFQSQRFDSSFSNFDS) has biased composition (low complexity). The segment covering 66–79 (RPETQSPPSINSFD) has biased composition (polar residues). The segment at 90–152 (SAMEKEEGFA…TIENNKKLNR (63 aa)) is involved in binding clathrin heavy chain. A coiled-coil region spans residues 105–164 (RLNALRLEEKEKEEKEMVQQILEAAEQYKAEFYSKRNVTIENNKKLNREKEKFFLENQEK). Positions 224–234 (LKHNPPTHMKP) are enriched in basic residues. The interval 224 to 258 (LKHNPPTHMKPKLPSPSGADPNVSVSEQVTVTEKL) is disordered. Positions 246–258 (VSVSEQVTVTEKL) are enriched in polar residues.

Belongs to the clathrin light chain family. Clathrin coats are formed from molecules containing 3 heavy chains and 3 light chains.

Its subcellular location is the cytoplasmic vesicle membrane. It localises to the membrane. It is found in the coated pit. In terms of biological role, clathrin is the major protein of the polyhedral coat of coated pits and vesicles. This Arabidopsis thaliana (Mouse-ear cress) protein is Clathrin light chain 3.